The chain runs to 176 residues: Large ribosomal subunit protein uL10 (176 aa).

It belongs to the universal ribosomal protein uL10 family. Part of the ribosomal stalk of the 50S ribosomal subunit. The N-terminus interacts with L11 and the large rRNA to form the base of the stalk. The C-terminus forms an elongated spine to which L12 dimers bind in a sequential fashion forming a multimeric L10(L12)X complex.

In terms of biological role, forms part of the ribosomal stalk, playing a central role in the interaction of the ribosome with GTP-bound translation factors. The chain is Large ribosomal subunit protein uL10 from Teredinibacter turnerae (strain ATCC 39867 / T7901).